Consider the following 240-residue polypeptide: UDP-2,3-diacylglucosamine hydrolase (240 aa).

Residues aspartate 8, histidine 10, aspartate 41, asparagine 79, and histidine 114 each coordinate Mn(2+). 79 to 80 provides a ligand contact to substrate; it reads NR. Substrate is bound by residues aspartate 122, serine 160, asparagine 164, lysine 167, and histidine 195. Mn(2+) is bound by residues histidine 195 and histidine 197.

The protein belongs to the LpxH family. It depends on Mn(2+) as a cofactor.

The protein resides in the cell inner membrane. It catalyses the reaction UDP-2-N,3-O-bis[(3R)-3-hydroxytetradecanoyl]-alpha-D-glucosamine + H2O = 2-N,3-O-bis[(3R)-3-hydroxytetradecanoyl]-alpha-D-glucosaminyl 1-phosphate + UMP + 2 H(+). It participates in glycolipid biosynthesis; lipid IV(A) biosynthesis; lipid IV(A) from (3R)-3-hydroxytetradecanoyl-[acyl-carrier-protein] and UDP-N-acetyl-alpha-D-glucosamine: step 4/6. Functionally, hydrolyzes the pyrophosphate bond of UDP-2,3-diacylglucosamine to yield 2,3-diacylglucosamine 1-phosphate (lipid X) and UMP by catalyzing the attack of water at the alpha-P atom. Involved in the biosynthesis of lipid A, a phosphorylated glycolipid that anchors the lipopolysaccharide to the outer membrane of the cell. In Escherichia coli (strain SE11), this protein is UDP-2,3-diacylglucosamine hydrolase.